The following is a 671-amino-acid chain: Condensin complex subunit 2 (671 aa).

Polar residues predominate over residues 1-24; that stretch reads MDESLTPNPKQKPASTTTRIQAPT. Disordered regions lie at residues 1–33, 404–444, and 510–564; these read MDESLTPNPKQKPASTTTRIQAPTSPFFLGSND, NSWA…KQAE, and RRKN…ISQP. Residues 406 to 415 carry the Kleisin-gamma middle domain (GM domain) involved in chromosome-binding motif; that stretch reads WAGPDHWKYR. Over residues 536-556 the composition is skewed to acidic residues; that stretch reads VYDDDDGPFDDNENDQSDAED.

This sequence belongs to the CND2 (condensin subunit 2) family. In terms of assembly, component of the condensin complex. In terms of tissue distribution, mostly expressed in flower buds and flowers, and, to a lower extent, in roots, stems, leaves and seedlings.

Its subcellular location is the cytoplasm. The protein localises to the chromosome. Its function is as follows. Regulatory subunit of the condensin complex, a complex required for conversion of interphase chromatin into mitotic-like condense chromosomes. The condensin complex probably introduces positive supercoils into relaxed DNA in the presence of type I topoisomerases and converts nicked DNA into positive knotted forms in the presence of type II topoisomerases. Essential protein. The sequence is that of Condensin complex subunit 2 (CAPH) from Arabidopsis thaliana (Mouse-ear cress).